We begin with the raw amino-acid sequence, 732 residues long: Catalase-peroxidase (732 aa).

Residues 1 to 20 (MDKDSKRPVVGSTVRGGMSN) form a disordered region. Positions 92 to 220 (WHSAGTYRMG…LAAVQMGLIY (129 aa)) form a cross-link, tryptophyl-tyrosyl-methioninium (Trp-Tyr) (with M-246). The active-site Proton acceptor is His-93. The tryptophyl-tyrosyl-methioninium (Tyr-Met) (with W-92) cross-link spans 220–246 (YVNPEGPDGNPDPVAAGYDVIETFARM). His-261 contacts heme b.

This sequence belongs to the peroxidase family. Peroxidase/catalase subfamily. In terms of assembly, homodimer or homotetramer. The cofactor is heme b. Formation of the three residue Trp-Tyr-Met cross-link is important for the catalase, but not the peroxidase activity of the enzyme.

The catalysed reaction is H2O2 + AH2 = A + 2 H2O. It carries out the reaction 2 H2O2 = O2 + 2 H2O. Bifunctional enzyme with both catalase and broad-spectrum peroxidase activity. The polypeptide is Catalase-peroxidase (Desulfosudis oleivorans (strain DSM 6200 / JCM 39069 / Hxd3) (Desulfococcus oleovorans)).